The chain runs to 43 residues: Large ribosomal subunit protein uL5 (43 aa).

Belongs to the universal ribosomal protein uL5 family. Part of the 50S ribosomal subunit; part of the 5S rRNA/L5/L18/L25 subcomplex. Contacts the 5S rRNA and the P site tRNA. Forms a bridge to the 30S subunit in the 70S ribosome.

Its function is as follows. This is one of the proteins that bind and probably mediate the attachment of the 5S RNA into the large ribosomal subunit, where it forms part of the central protuberance. In the 70S ribosome it contacts protein S13 of the 30S subunit (bridge B1b), connecting the 2 subunits; this bridge is implicated in subunit movement. Contacts the P site tRNA; the 5S rRNA and some of its associated proteins might help stabilize positioning of ribosome-bound tRNAs. In Proteus vulgaris, this protein is Large ribosomal subunit protein uL5 (rplE).